We begin with the raw amino-acid sequence, 88 residues long: Small ribosomal subunit protein uS17 (88 aa).

Belongs to the universal ribosomal protein uS17 family. In terms of assembly, part of the 30S ribosomal subunit.

Its function is as follows. One of the primary rRNA binding proteins, it binds specifically to the 5'-end of 16S ribosomal RNA. In Prochlorococcus marinus subsp. pastoris (strain CCMP1986 / NIES-2087 / MED4), this protein is Small ribosomal subunit protein uS17.